The following is a 505-amino-acid chain: Flagellin (505 aa).

The protein belongs to the bacterial flagellin family.

Its subcellular location is the secreted. The protein localises to the bacterial flagellum. In terms of biological role, flagellin is the subunit protein which polymerizes to form the filaments of bacterial flagella. This chain is Flagellin (fliC), found in Salmonella derby.